Reading from the N-terminus, the 252-residue chain is Probable transcriptional regulatory protein A1E_02520 (252 aa).

This sequence belongs to the TACO1 family.

The protein resides in the cytoplasm. The sequence is that of Probable transcriptional regulatory protein A1E_02520 from Rickettsia canadensis (strain McKiel).